Reading from the N-terminus, the 363-residue chain is UDP-N-acetylglucosamine--N-acetylmuramyl-(pentapeptide) pyrophosphoryl-undecaprenol N-acetylglucosamine transferase (363 aa).

Residues 10–12, asparagine 124, serine 195, isoleucine 250, and glutamine 295 each bind UDP-N-acetyl-alpha-D-glucosamine; that span reads TGG.

It belongs to the glycosyltransferase 28 family. MurG subfamily.

It is found in the cell membrane. The enzyme catalyses di-trans,octa-cis-undecaprenyl diphospho-N-acetyl-alpha-D-muramoyl-L-alanyl-D-glutamyl-meso-2,6-diaminopimeloyl-D-alanyl-D-alanine + UDP-N-acetyl-alpha-D-glucosamine = di-trans,octa-cis-undecaprenyl diphospho-[N-acetyl-alpha-D-glucosaminyl-(1-&gt;4)]-N-acetyl-alpha-D-muramoyl-L-alanyl-D-glutamyl-meso-2,6-diaminopimeloyl-D-alanyl-D-alanine + UDP + H(+). It functions in the pathway cell wall biogenesis; peptidoglycan biosynthesis. Cell wall formation. Catalyzes the transfer of a GlcNAc subunit on undecaprenyl-pyrophosphoryl-MurNAc-pentapeptide (lipid intermediate I) to form undecaprenyl-pyrophosphoryl-MurNAc-(pentapeptide)GlcNAc (lipid intermediate II). The protein is UDP-N-acetylglucosamine--N-acetylmuramyl-(pentapeptide) pyrophosphoryl-undecaprenol N-acetylglucosamine transferase of Halalkalibacterium halodurans (strain ATCC BAA-125 / DSM 18197 / FERM 7344 / JCM 9153 / C-125) (Bacillus halodurans).